Consider the following 158-residue polypeptide: Small ribosomal subunit protein uS7 (158 aa).

It belongs to the universal ribosomal protein uS7 family. As to quaternary structure, part of the 30S ribosomal subunit. Contacts proteins S9 and S11.

In terms of biological role, one of the primary rRNA binding proteins, it binds directly to 16S rRNA where it nucleates assembly of the head domain of the 30S subunit. Is located at the subunit interface close to the decoding center, probably blocks exit of the E-site tRNA. This is Small ribosomal subunit protein uS7 from Flavobacterium psychrophilum (strain ATCC 49511 / DSM 21280 / CIP 103535 / JIP02/86).